Consider the following 590-residue polypeptide: Cytosolic Fe-S cluster assembly factor nar1 (590 aa).

Cysteine 20 serves as a coordination point for [4Fe-4S] cluster. Residues 25 to 50 are disordered; the sequence is ESLPQKQSNENPYEVTTEDKVQPENP. [4Fe-4S] cluster-binding residues include cysteine 60, cysteine 63, cysteine 66, cysteine 204, and cysteine 259. The tract at residues 423 to 446 is disordered; sequence PGAKVATGQTAGGRRQPISRNGAS. The [4Fe-4S] cluster site is built by cysteine 461 and cysteine 465.

This sequence belongs to the NARF family.

Component of the cytosolic Fe/S protein assembly machinery. Required for maturation of extramitochondrial Fe/S proteins. May play a role in the transfer of pre-assembled Fe/S clusters to target apoproteins. The protein is Cytosolic Fe-S cluster assembly factor nar1 (nar1) of Emericella nidulans (strain FGSC A4 / ATCC 38163 / CBS 112.46 / NRRL 194 / M139) (Aspergillus nidulans).